Consider the following 245-residue polypeptide: MAEPKYKRVLIKLSGEALAGEKGVGIDLPTVQAIAKEIAEVADSGIQIALVIGGGNLWRGEPAAEAGMDRVQADYTGMLGTTMNALVMADSLKQLGVDTRVQTAIDMKSVAEPYIRGRALRHFEKGRIVIFAAGIGSPYFSTDTTAALRAAEIESDAILMAKNGVDGVYNDDPRKNADAVKFDKLTHVEVIKRGLKIIDATASTLSMDNDIDLVVFNMNEPGNIKRVIFGEQIGTTVSNKAELRK.

12–15 (KLSG) lines the ATP pocket. The tract at residues 20–25 (GEKGVG) is involved in allosteric activation by GTP. Residue G54 participates in UMP binding. G55 and R59 together coordinate ATP. Residues D74 and 135–142 (IGSPYFST) each bind UMP. ATP-binding residues include N163, Y169, and D172.

The protein belongs to the UMP kinase family. As to quaternary structure, homohexamer.

It is found in the cytoplasm. The enzyme catalyses UMP + ATP = UDP + ADP. The protein operates within pyrimidine metabolism; CTP biosynthesis via de novo pathway; UDP from UMP (UMPK route): step 1/1. Allosterically activated by GTP. Inhibited by UTP. Its function is as follows. Catalyzes the reversible phosphorylation of UMP to UDP. The protein is Uridylate kinase of Streptococcus thermophilus (strain ATCC BAA-250 / LMG 18311).